The sequence spans 213 residues: Probable transaldolase (213 aa).

The Schiff-base intermediate with substrate role is filled by lysine 83.

It belongs to the transaldolase family. Type 3B subfamily.

Its subcellular location is the cytoplasm. The catalysed reaction is D-sedoheptulose 7-phosphate + D-glyceraldehyde 3-phosphate = D-erythrose 4-phosphate + beta-D-fructose 6-phosphate. Its pathway is carbohydrate degradation; pentose phosphate pathway; D-glyceraldehyde 3-phosphate and beta-D-fructose 6-phosphate from D-ribose 5-phosphate and D-xylulose 5-phosphate (non-oxidative stage): step 2/3. Transaldolase is important for the balance of metabolites in the pentose-phosphate pathway. The protein is Probable transaldolase of Syntrophomonas wolfei subsp. wolfei (strain DSM 2245B / Goettingen).